A 131-amino-acid polypeptide reads, in one-letter code: Interleukin-13 (131 aa).

A signal peptide spans 1–18; the sequence is MALWLTLVIALTCFGGLA. N-linked (GlcNAc...) asparagine glycans are attached at residues N39, N50, N58, and N74. Cystine bridges form between C49/C78 and C66/C92.

The protein belongs to the IL-4/IL-13 family. As to quaternary structure, interacts with IL13RA2.

The protein resides in the secreted. Cytokine that plays important roles in allergic inflammation and immune response to parasite infection. Synergizes with IL2 in regulating interferon-gamma synthesis. Stimulates B-cell proliferation, and activation of eosinophils, basophils, and mast cells. Plays an important role in controlling IL33 activity by modulating the production of transmembrane and soluble forms of interleukin-1 receptor-like 1/IL1RL1. Displays the capacity to antagonize Th1-driven proinflammatory immune response and downregulates synthesis of many proinflammatory cytokines including IL1, IL6, IL10, IL12 and TNF-alpha through a mechanism that partially involves suppression of NF-kappa-B. Also functions on nonhematopoietic cells, including endothelial cells where it induces vascular cell adhesion protein 1/VCAM1, which is important in the recruitment of eosinophils. Exerts its biological effects through its receptors which comprises the IL4R chain and the IL13RA1 chain, to activate JAK1 and TYK2, leading to the activation of STAT6. Aside from IL13RA1, another receptor IL13RA2 acts as a high affinity decoy for IL13 and mediates internalization and depletion of extracellular IL13. The polypeptide is Interleukin-13 (IL13) (Sus scrofa (Pig)).